We begin with the raw amino-acid sequence, 76 residues long: Small ribosomal subunit protein bS18 (76 aa).

The protein belongs to the bacterial ribosomal protein bS18 family. As to quaternary structure, part of the 30S ribosomal subunit. Forms a tight heterodimer with protein bS6.

Functionally, binds as a heterodimer with protein bS6 to the central domain of the 16S rRNA, where it helps stabilize the platform of the 30S subunit. The chain is Small ribosomal subunit protein bS18 from Symbiobacterium thermophilum (strain DSM 24528 / JCM 14929 / IAM 14863 / T).